The sequence spans 80 residues: Acyl carrier protein (80 aa).

The Carrier domain maps to 2–77 (SEINQKVVDI…QVVEYLEKRL (76 aa)). Ser-37 carries the post-translational modification O-(pantetheine 4'-phosphoryl)serine.

This sequence belongs to the acyl carrier protein (ACP) family. 4'-phosphopantetheine is transferred from CoA to a specific serine of apo-ACP by AcpS. This modification is essential for activity because fatty acids are bound in thioester linkage to the sulfhydryl of the prosthetic group.

The protein resides in the cytoplasm. Its pathway is lipid metabolism; fatty acid biosynthesis. Carrier of the growing fatty acid chain in fatty acid biosynthesis. The sequence is that of Acyl carrier protein from Amoebophilus asiaticus (strain 5a2).